Reading from the N-terminus, the 332-residue chain is Biotin synthase (332 aa).

The Radical SAM core domain maps to 53–283 (WGKGGIHACS…VHPHSIIKFA (231 aa)). Positions 71, 75, and 78 each coordinate [4Fe-4S] cluster. [2Fe-2S] cluster is bound by residues cysteine 150, cysteine 211, and lysine 281.

Belongs to the radical SAM superfamily. Biotin synthase family. As to quaternary structure, homodimer. It depends on [4Fe-4S] cluster as a cofactor. The cofactor is [2Fe-2S] cluster.

The catalysed reaction is (4R,5S)-dethiobiotin + (sulfur carrier)-SH + 2 reduced [2Fe-2S]-[ferredoxin] + 2 S-adenosyl-L-methionine = (sulfur carrier)-H + biotin + 2 5'-deoxyadenosine + 2 L-methionine + 2 oxidized [2Fe-2S]-[ferredoxin]. Its pathway is cofactor biosynthesis; biotin biosynthesis; biotin from 7,8-diaminononanoate: step 2/2. Functionally, catalyzes the conversion of dethiobiotin (DTB) to biotin by the insertion of a sulfur atom into dethiobiotin via a radical-based mechanism. In Chlorobium phaeovibrioides (strain DSM 265 / 1930) (Prosthecochloris vibrioformis (strain DSM 265)), this protein is Biotin synthase.